Here is a 433-residue protein sequence, read N- to C-terminus: GTPase Der (433 aa).

2 consecutive EngA-type G domains span residues 5–167 (KKVL…GEAN) and 174–349 (IKVG…DQLE). GTP-binding positions include 11–18 (GRPNVGKS), 58–62 (DTGGF), 119–122 (NKVD), 180–187 (GKPNSGKS), 227–231 (DTAGI), and 292–295 (SKWD). Residues 350–429 (FKTSTPDLNK…PILVELREKI (80 aa)) enclose the KH-like domain.

The protein belongs to the TRAFAC class TrmE-Era-EngA-EngB-Septin-like GTPase superfamily. EngA (Der) GTPase family. In terms of assembly, associates with the 50S ribosomal subunit.

Functionally, GTPase that plays an essential role in the late steps of ribosome biogenesis. The chain is GTPase Der from Borreliella afzelii (strain PKo) (Borrelia afzelii).